The following is a 425-amino-acid chain: Putative nucleoside transporter YegT (425 aa).

The Periplasmic segment spans residues 1 to 8; sequence MKTTAKLS. Residues 9-29 traverse the membrane as a helical segment; sequence FMMFVEWFIWGAWFVPLWLWL. The Cytoplasmic portion of the chain corresponds to 30-38; sequence SKSGFSAGE. Residues 39-59 form a helical membrane-spanning segment; it reads IGWSYACTAIAAILSPILVGS. Residues 60 to 63 are Periplasmic-facing; it reads ITDR. A helical membrane pass occupies residues 64–84; it reads FFSAQKVLAVLMFAGALLMYF. Topologically, residues 85-90 are cytoplasmic; sequence AAQQTT. The helical transmembrane segment at 91-111 threads the bilayer; sequence FAGFFPLLLAYSLTYMPTIAL. Over 112-131 the chain is Periplasmic; the sequence is TNSIAFANVPDVERDFPRIR. Residues 132–152 form a helical membrane-spanning segment; sequence VMGTIGWIASGLACGFLPQIL. Topologically, residues 153-161 are cytoplasmic; the sequence is GYADISPTN. Residues 162 to 182 traverse the membrane as a helical segment; the sequence is IPLLITAGSSALLGVFAFFLP. The Periplasmic portion of the chain corresponds to 183 to 210; sequence DTPPKSTGKMDIKVMLGLDALILLRDKN. A helical transmembrane segment spans residues 211–231; sequence FLVFFFCSFLFAMPLAFYYIF. At 232–244 the chain is on the cytoplasmic side; that stretch reads ANGYLTEVGMKNA. The helical transmembrane segment at 245–265 threads the bilayer; sequence TGWMTLGQFSEIFFMLALPFF. The Periplasmic portion of the chain corresponds to 266 to 287; the sequence is TKRFGIKKVLLLGLVTAAIRYG. The helical transmembrane segment at 288–308 threads the bilayer; it reads FFIYGSADEYFTYALLFLGIL. Over 309–339 the chain is Cytoplasmic; that stretch reads LHGVSYDFYYVTAYIYVDKKAPVHMRTAAQG. Residues 340-360 traverse the membrane as a helical segment; it reads LITLCCQGFGSLLGYRLGGVM. Over 361-379 the chain is Periplasmic; that stretch reads MEKMFAYQEPVNGLTFNWS. Residues 380–400 form a helical membrane-spanning segment; sequence GMWTFGAVMIAIIAVLFMIFF. Residues 401–425 are Cytoplasmic-facing; the sequence is RESDNEITAIKVDDRDIALTQGEVK.

Belongs to the major facilitator superfamily. Nucleoside:H(+) symporter (NHS) (TC 2.A.1.10) family.

It is found in the cell inner membrane. Could be involved in nucleoside transport. This chain is Putative nucleoside transporter YegT (yegT), found in Escherichia coli (strain K12).